The sequence spans 218 residues: Carnitine transport permease protein OpuCB (218 aa).

An ABC transmembrane type-1 domain is found at 19-198; the sequence is TWQHLFISLS…ILALVVEFAL (180 aa). A run of 5 helical transmembrane segments spans residues 23 to 43, 48 to 68, 79 to 101, 149 to 169, and 179 to 199; these read LFIS…TGIL, PKVA…PSLA, VGTL…RNTF, VIAW…DFIF, and LILG…FALG.

The protein belongs to the binding-protein-dependent transport system permease family. In terms of assembly, the complex is composed of two ATP-binding proteins (OpuCA), two transmembrane proteins (OpuCB and OpuCD) and a solute-binding protein (OpuCC).

Its subcellular location is the cell membrane. Functionally, part of the ABC transporter complex OpuCABCD involved in carnitine uptake. Probably responsible for the translocation of the substrate across the membrane. Involved, with BetL and GbuABC, in osmoprotection and cryoprotection of Listeria. The sequence is that of Carnitine transport permease protein OpuCB (opuCB) from Listeria monocytogenes.